The primary structure comprises 121 residues: MARVKRGVTKHQRHKKILKLAKGYFGAKSKLFRPANEQVIKSLAYAYAHRRQRKGDFRKLWIARINAAARMNGINYSRLVNGLKKAGVEINRKMLADMAVNDQAGFNRLVDIAKEKLGLGA.

It belongs to the bacterial ribosomal protein bL20 family.

Binds directly to 23S ribosomal RNA and is necessary for the in vitro assembly process of the 50S ribosomal subunit. It is not involved in the protein synthesizing functions of that subunit. This Moorella thermoacetica (strain ATCC 39073 / JCM 9320) protein is Large ribosomal subunit protein bL20.